The primary structure comprises 418 residues: Inner capsid protein sigma-2 (418 aa).

It belongs to the orthoreovirus sigma-1 protein family. In terms of assembly, interacts with protein mu-NS; in viral inclusions.

Its subcellular location is the virion. In terms of biological role, inner capsid (core) component. The sequence is that of Inner capsid protein sigma-2 (S2) from Mammalia (T1L).